We begin with the raw amino-acid sequence, 282 residues long: 4-diphosphocytidyl-2-C-methyl-D-erythritol kinase (282 aa).

Residue Lys11 is part of the active site. Residue 95 to 105 participates in ATP binding; sequence PMGGGVGGGSS. Asp137 is an active-site residue.

Belongs to the GHMP kinase family. IspE subfamily.

It carries out the reaction 4-CDP-2-C-methyl-D-erythritol + ATP = 4-CDP-2-C-methyl-D-erythritol 2-phosphate + ADP + H(+). The protein operates within isoprenoid biosynthesis; isopentenyl diphosphate biosynthesis via DXP pathway; isopentenyl diphosphate from 1-deoxy-D-xylulose 5-phosphate: step 3/6. In terms of biological role, catalyzes the phosphorylation of the position 2 hydroxy group of 4-diphosphocytidyl-2C-methyl-D-erythritol. This is 4-diphosphocytidyl-2-C-methyl-D-erythritol kinase from Haemophilus ducreyi (strain 35000HP / ATCC 700724).